The sequence spans 504 residues: ATP synthase subunit alpha 2 (504 aa).

ATP is bound at residue 169-176 (GDRQTGKT).

The protein belongs to the ATPase alpha/beta chains family. F-type ATPases have 2 components, CF(1) - the catalytic core - and CF(0) - the membrane proton channel. CF(1) has five subunits: alpha(3), beta(3), gamma(1), delta(1), epsilon(1). CF(0) has three main subunits: a(1), b(2) and c(9-12). The alpha and beta chains form an alternating ring which encloses part of the gamma chain. CF(1) is attached to CF(0) by a central stalk formed by the gamma and epsilon chains, while a peripheral stalk is formed by the delta and b chains.

The protein resides in the cell membrane. The enzyme catalyses ATP + H2O + 4 H(+)(in) = ADP + phosphate + 5 H(+)(out). Its function is as follows. Produces ATP from ADP in the presence of a proton gradient across the membrane. The alpha chain is a regulatory subunit. This chain is ATP synthase subunit alpha 2, found in Listeria monocytogenes serovar 1/2a (strain ATCC BAA-679 / EGD-e).